Consider the following 487-residue polypeptide: Cobyric acid synthase (487 aa).

In terms of domain architecture, GATase cobBQ-type spans 249 to 435; it reads GIDIAIVRLP…IHGIFDEGDF (187 aa). The Nucleophile role is filled by Cys330. His427 is a catalytic residue.

This sequence belongs to the CobB/CobQ family. CobQ subfamily.

Its pathway is cofactor biosynthesis; adenosylcobalamin biosynthesis. Catalyzes amidations at positions B, D, E, and G on adenosylcobyrinic A,C-diamide. NH(2) groups are provided by glutamine, and one molecule of ATP is hydrogenolyzed for each amidation. The polypeptide is Cobyric acid synthase (Clostridium perfringens (strain SM101 / Type A)).